The sequence spans 112 residues: T cell receptor alpha variable 2 (112 aa).

Residues methionine 1 to serine 25 form the signal peptide. One can recognise an Ig-like domain in the interval lysine 26 to glutamate 112. A disulfide bridge links cysteine 47 with cysteine 109. Residues asparagine 48 and asparagine 84 are each glycosylated (N-linked (GlcNAc...) asparagine).

Alpha-beta TR is a heterodimer composed of an alpha and beta chain; disulfide-linked. The alpha-beta TR is associated with the transmembrane signaling CD3 coreceptor proteins to form the TR-CD3 (TcR or TCR). The assembly of alpha-beta TR heterodimers with CD3 occurs in the endoplasmic reticulum where a single alpha-beta TR heterodimer associates with one CD3D-CD3E heterodimer, one CD3G-CD3E heterodimer and one CD247 homodimer forming a stable octameric structure. CD3D-CD3E and CD3G-CD3E heterodimers preferentially associate with TR alpha and TR beta chains, respectively. The association of the CD247 homodimer is the last step of TcR assembly in the endoplasmic reticulum and is required for transport to the cell surface.

Its subcellular location is the cell membrane. Its function is as follows. V region of the variable domain of T cell receptor (TR) alpha chain that participates in the antigen recognition. Alpha-beta T cell receptors are antigen specific receptors which are essential to the immune response and are present on the cell surface of T lymphocytes. Recognize peptide-major histocompatibility (MH) (pMH) complexes that are displayed by antigen presenting cells (APC), a prerequisite for efficient T cell adaptive immunity against pathogens. Binding of alpha-beta TR to pMH complex initiates TR-CD3 clustering on the cell surface and intracellular activation of LCK that phosphorylates the ITAM motifs of CD3G, CD3D, CD3E and CD247 enabling the recruitment of ZAP70. In turn ZAP70 phosphorylates LAT, which recruits numerous signaling molecules to form the LAT signalosome. The LAT signalosome propagates signal branching to three major signaling pathways, the calcium, the mitogen-activated protein kinase (MAPK) kinase and the nuclear factor NF-kappa-B (NF-kB) pathways, leading to the mobilization of transcription factors that are critical for gene expression and essential for T cell growth and differentiation. The T cell repertoire is generated in the thymus, by V-(D)-J rearrangement. This repertoire is then shaped by intrathymic selection events to generate a peripheral T cell pool of self-MH restricted, non-autoaggressive T cells. Post-thymic interaction of alpha-beta TR with the pMH complexes shapes TR structural and functional avidity. In Homo sapiens (Human), this protein is T cell receptor alpha variable 2.